The sequence spans 253 residues: Spermatogenesis-associated protein 9 (253 aa).

The chain crosses the membrane as a helical span at residues 144 to 166 (LTSIMCASYAALIYLTVCVNAVL). The segment covering 210–228 (AKPYRSLPEKPDSISDRPK) has biased composition (basic and acidic residues). Residues 210 to 231 (AKPYRSLPEKPDSISDRPKLPA) are disordered.

The protein resides in the membrane. Its function is as follows. May play at role in testicular development/spermatogenesis and may be an important factor in male infertility. This is Spermatogenesis-associated protein 9 (SPATA9) from Bos taurus (Bovine).